We begin with the raw amino-acid sequence, 203 residues long: Glycerol-3-phosphate acyltransferase (203 aa).

4 helical membrane-spanning segments follow: residues 4–24, 80–100, 116–136, and 138–158; these read LVLL…AVLI, PFLL…PIFF, APIG…TVFI, and GYSS…TWFV.

Belongs to the PlsY family. In terms of assembly, probably interacts with PlsX.

The protein localises to the cell inner membrane. It catalyses the reaction an acyl phosphate + sn-glycerol 3-phosphate = a 1-acyl-sn-glycero-3-phosphate + phosphate. It participates in lipid metabolism; phospholipid metabolism. In terms of biological role, catalyzes the transfer of an acyl group from acyl-phosphate (acyl-PO(4)) to glycerol-3-phosphate (G3P) to form lysophosphatidic acid (LPA). This enzyme utilizes acyl-phosphate as fatty acyl donor, but not acyl-CoA or acyl-ACP. This is Glycerol-3-phosphate acyltransferase from Photobacterium profundum (strain SS9).